Consider the following 152-residue polypeptide: Psoriasis susceptibility 1 candidate gene 1 protein (152 aa).

A compositionally biased stretch (polar residues) spans Met1–Pro31. Residues Met1–Asn42 are disordered.

Expressed in skin. Also found in heart, placenta, liver, skeletal muscle and pancreas.

The protein is Psoriasis susceptibility 1 candidate gene 1 protein (PSORS1C1) of Homo sapiens (Human).